Consider the following 152-residue polypeptide: Transcription elongation factor Spt5 (152 aa).

Positions 98-127 (EGDLVEVVSGPFRGMQAQVVKVTEGKGEVV) constitute a KOW domain.

The protein belongs to the archaeal Spt5 family. As to quaternary structure, heterodimer composed of Spt4 and Spt5. Interacts with RNA polymerase (RNAP).

Its function is as follows. Stimulates transcription elongation. The polypeptide is Transcription elongation factor Spt5 (Acidianus ambivalens (Desulfurolobus ambivalens)).